The chain runs to 583 residues: Hyaluronan synthase-related protein (583 aa).

At 1–29 the chain is on the cytoplasmic side; that stretch reads MENTTDPENIPVSKPKYPTIRRILSQTFR. The helical transmembrane segment at 30–50 threads the bilayer; it reads ILLLFSITTAYVLGYQALCHQ. At 51-52 the chain is on the extracellular side; sequence GL. The helical transmembrane segment at 53–73 threads the bilayer; that stretch reads LITFGLYGAAMLLHLLMQGIF. Residues 74-393 lie on the Cytoplasmic side of the membrane; the sequence is ANLEIRRIEK…CNAQWWHQHH (320 aa). The helical transmembrane segment at 394–414 threads the bilayer; that stretch reads IWMTYESATGIFFPFFVTAVL. The Extracellular portion of the chain corresponds to 415–425; it reads IRLMYSSSLCN. The helical transmembrane segment at 426–446 threads the bilayer; the sequence is IVWLFLCIQIMSLLLSLYASW. Topologically, residues 447–457 are cytoplasmic; it reads QSKKLSMVLMS. Residues 458 to 478 form a helical membrane-spanning segment; sequence LYSTLYIIWLLPCQLVALLTI. Residues 479–497 lie on the Extracellular side of the membrane; that stretch reads AKSDWGTSGRKKVVNNYVP. Residues 498 to 518 traverse the membrane as a helical segment; that stretch reads LFSLSIWAAVLLGGLCYSMYI. Residues 519-535 are Cytoplasmic-facing; the sequence is GCRKDWSKPQANRELYH. A helical membrane pass occupies residues 536–556; the sequence is LLYGCAGYMAYWVLMTVIYCV. At 557–583 the chain is on the extracellular side; sequence SGSCCKMRSQAVPQTHDITSLSVSLLV.

Belongs to the NodC/HAS family.

Its subcellular location is the membrane. The protein is Hyaluronan synthase-related protein (has-rs) of Xenopus laevis (African clawed frog).